An 814-amino-acid chain; its full sequence is Probable G-protein coupled receptor 156 (814 aa).

At 1 to 47 (MEPEINCSELCDSFPGQELDRRPLHDLCKTTITSSHHSSKTISSLSP) the chain is on the extracellular side. N-linked (GlcNAc...) asparagine glycosylation is present at Asn-6. The chain crosses the membrane as a helical span at residues 48-68 (VLLGIVWTFLSCGLLLILFFL). Over 69-86 (AFTIHCRKNRIVKMSSPN) the chain is Cytoplasmic. A helical transmembrane segment spans residues 87 to 107 (LNIVTLLGSCLTYSSAYLFGI). Residues 108–118 (QDVLVGSSMET) are Extracellular-facing. A helical transmembrane segment spans residues 119-139 (LIQTRLSMLCIGTSLVFGPIL). Residues 140–164 (GKSWRLYKVFTQRVPDKRVIIKDLQ) lie on the Cytoplasmic side of the membrane. A helical transmembrane segment spans residues 165-185 (LLGLVAALLMADVILLMTWVL). Over 186-222 (TDPIQCLQILSVSMTVTGKDVSCTSTSTHFCASRYSD) the chain is Extracellular. A helical membrane pass occupies residues 223–243 (VWIALIWGCKGLLLLYGAYLA). At 244 to 257 (GLTGHVSSPPVNQS) the chain is on the cytoplasmic side. The chain crosses the membrane as a helical span at residues 258–278 (LTIMVGVNLLVLAAGLLFVVT). The Extracellular portion of the chain corresponds to 279-288 (RYLHSWPNLV). A helical membrane pass occupies residues 289 to 309 (FGLTSGGIFVCTTTINCFIFI). Topologically, residues 310 to 814 (PQLKQWKAFE…FKDDLKPTLV (505 aa)) are cytoplasmic. Residues 354-390 (EKSSMERLLTEKNAVIESLQEQVNNAKEKIVRLMSAE) adopt a coiled-coil conformation. Disordered stretches follow at residues 422-545 (AQGP…SSVI), 557-724 (GLGP…PEQW), and 769-792 (SSSDSSDSGTSDTDPEPTGGLASW). Polar residues predominate over residues 443–454 (SQCTSGPSSYAQ). A compositionally biased stretch (basic and acidic residues) spans 468–484 (GKEEKISDSKDFSDHLD). Residues 486-496 (GCSQKPWTEQS) are compositionally biased toward polar residues. The span at 523 to 545 (QRQRHLENSEEPPERRSRVSSVI) shows a compositional bias: basic and acidic residues. Residues 563 to 581 (SLSTAPSCHQQTWKNSAAF) are compositionally biased toward polar residues. The segment covering 599–610 (VRRRRAAQRARS) has biased composition (basic residues). Positions 639-651 (NGDSPSLAPQTTD) are enriched in polar residues. A compositionally biased stretch (low complexity) spans 769-780 (SSSDSSDSGTSD).

Belongs to the G-protein coupled receptor 3 family. GABA-B receptor subfamily. Ubiquitous expression both in the CNS and in peripheral tissues. Very high expression in fetal brain and testis relative to expression in other tissues.

It localises to the cell membrane. Functionally, orphan G-protein coupled receptor involved in the regulation of hair cell orientation in mechanosensory organs of the inner ear. It is required to trigger a 180 degree reversal in hair cell orientation, creating a virtual line of polarity reversal (LPR) across which stereociliary bundles are arranged in opposite orientations. This Homo sapiens (Human) protein is Probable G-protein coupled receptor 156 (GPR156).